The following is a 195-amino-acid chain: Putative NADH dehydrogenase/NAD(P)H nitroreductase Caul_0018 (195 aa).

It belongs to the nitroreductase family. HadB/RutE subfamily. It depends on FMN as a cofactor.

The protein is Putative NADH dehydrogenase/NAD(P)H nitroreductase Caul_0018 of Caulobacter sp. (strain K31).